Consider the following 931-residue polypeptide: MSSANSIKVVARFRPQNKVELESGGKPIVSFDGEDTCTVASKEAQGSFTFDRVFDMGCKQQDIFDFSIRSTVDDILNGYNGTVFAYGQTGAGKSYTMMGTNIDDDEGRGIIPRIVEQIFASIMSSPGTIEYTVRVSYMEIYMERIRDLLAPQNDNLPVHEEKNRGVYVKGLLEIYVSSVQEVYEVMRRGGNARAVAATNMNQESSRSHSIFVITITQKNVETGSAKSGQLFLVDLAGSEKVGKTGASGQTLEEAKKINKSLSALGMVINALTDGKSSHIPYRDSKLTRILQESLGGNSRTTLIINCSPSSYNDAETLGTLRFGMRAKSIKNKAKVNAELSPAELKSLLKKAQGQVTNFESYISSLEGEIQMWRAGEAVPKERWATPLTTDAVARTKADARTSTRPSTPSLISDSRSETPAISDRAGTPSLPLDKDEREEFLRRENELQDQISEKESQAASAEKQLRETKEELAYLKDHDSKVGKENEKLTTEVNEFKMQLERLTFESKEAQITMDALKEANSELTTELDEVKQQLLDVKMSAKESGAALDEKEKRKAEKMAKMMAGFDLGGEVFSENERHIAETIEKVDSLHELSATGDNIAPDEFKALKARLVETQGIVRQAELSMYSTSSSESDSRRRQELEARLEAVQAEYEEILTRNLGPEDIEEVKARLENAFANRQTAQSQFVEELKEDIAQKAAENTRMKTLIEDLQQRVKAGATAPMANGKTIQQQIAEFDVMKKSLMRDLQNRCERVVELEISLDETREQYNNVLRSSNNRAQQKKMAFLERNLEQLTQVQRQLVEQNSALKKEVAIAERKLIARNERIQSLESLLQDSQEKMAAANHKYVQLAAVKERLELAKAGSTRGLNSPGGFSFANAGSRIAKPLRGGGGGNDAPSIPTIQNLQGQNEGNTSSGSSSKRASWFFTKS.

One can recognise a Kinesin motor domain in the interval S6–I329. ATP contacts are provided by residues G87–S94 and G237–T244. Positions A342–A864 form a coiled coil. Disordered regions lie at residues T388–L465 and A886–S931. Over residues S402–P419 the composition is skewed to polar residues. Positions L432 to S456 are enriched in basic and acidic residues. Over residues P902–S931 the composition is skewed to polar residues.

The protein belongs to the TRAFAC class myosin-kinesin ATPase superfamily. Kinesin family. Kinesin subfamily.

Its subcellular location is the cytoplasm. The protein resides in the cytoskeleton. Its function is as follows. Kinesin is a microtubule-associated force-producing protein that may play a role in organelle transport. Its motor activity is directed toward the microtubule's plus end. In Gibberella moniliformis (Maize ear and stalk rot fungus), this protein is Kinesin heavy chain (KLP1).